The sequence spans 92 residues: Small ribosomal subunit protein uS19 (92 aa).

The protein belongs to the universal ribosomal protein uS19 family.

Protein S19 forms a complex with S13 that binds strongly to the 16S ribosomal RNA. The protein is Small ribosomal subunit protein uS19 of Macrococcus caseolyticus (strain JCSC5402) (Macrococcoides caseolyticum).